The chain runs to 419 residues: Mitochondrial chaperone BCS1 (419 aa).

The Mitochondrial intermembrane portion of the chain corresponds to 1–15 (MPLSDFVLALKDNPY). The chain crosses the membrane as a helical span at residues 16–32 (FGAGFGLVGVGTALALA). Topologically, residues 33 to 419 (RKGAQLGLVA…AIQNAESLRR (387 aa)) are mitochondrial matrix. The residue at position 181 (Tyr181) is a Phosphotyrosine. Residue 230 to 237 (GPPGCGKS) participates in ATP binding.

The protein belongs to the AAA ATPase family. BCS1 subfamily. Interacts with LETM1.

It is found in the mitochondrion inner membrane. It catalyses the reaction ATP + H2O = ADP + phosphate + H(+). Its function is as follows. Chaperone necessary for the incorporation of Rieske iron-sulfur protein UQCRFS1 into the mitochondrial respiratory chain complex III. Plays an important role in the maintenance of mitochondrial tubular networks, respiratory chain assembly and formation of the LETM1 complex. The protein is Mitochondrial chaperone BCS1 (BCS1L) of Bos taurus (Bovine).